Consider the following 448-residue polypeptide: Protein ECM7 (448 aa).

Topologically, residues 1-28 (MVMSRIRDTIARPFQNLTALEKVVQWLR) are cytoplasmic. A helical membrane pass occupies residues 29 to 49 (LGTTLLIISFGLALTVGPLSS). Over 50–204 (PRTLYMSRLD…MRSLKHKKAN (155 aa)) the chain is Extracellular. Residues 205–225 (VLHLLYAVISFQVCMLFFMIW) traverse the membrane as a helical segment. Over 226 to 246 (YYYIKGRFMNALKERALVHIN) the chain is Cytoplasmic. Residues 247-267 (SLLSLVVFIGGLISSISLAWV) traverse the membrane as a helical segment. Over 268 to 287 (NYTIQSRINTELEAFGFSYH) the chain is Extracellular. A helical transmembrane segment spans residues 288 to 308 (LGVTWFALLWCFAGLISVSCL). Over 309–448 (AWSGLEWCIS…VIKPSSALQF (140 aa)) the chain is Cytoplasmic. 2 stretches are compositionally biased toward polar residues: residues 351–363 (YSQR…STSG) and 383–406 (VDLN…NISN). 2 disordered regions span residues 351–411 (YSQR…GKHE) and 427–448 (RSSN…ALQF).

The protein localises to the membrane. Functionally, may be involved in cell wall organization and biogenesis. This chain is Protein ECM7 (ECM7), found in Saccharomyces cerevisiae (strain ATCC 204508 / S288c) (Baker's yeast).